Consider the following 379-residue polypeptide: Glutamate 5-kinase (379 aa).

Residue Lys19 coordinates ATP. Substrate is bound by residues Ser59, Asp146, and Asn158. Residues 178 to 179 (TD) and 220 to 226 (TGGMATK) contribute to the ATP site. Residues 285–363 (SGDIIIDDGA…KDIISILGHD (79 aa)) form the PUA domain.

The protein belongs to the glutamate 5-kinase family.

Its subcellular location is the cytoplasm. It carries out the reaction L-glutamate + ATP = L-glutamyl 5-phosphate + ADP. It functions in the pathway amino-acid biosynthesis; L-proline biosynthesis; L-glutamate 5-semialdehyde from L-glutamate: step 1/2. Functionally, catalyzes the transfer of a phosphate group to glutamate to form L-glutamate 5-phosphate. This chain is Glutamate 5-kinase, found in Vibrio parahaemolyticus serotype O3:K6 (strain RIMD 2210633).